Here is a 590-residue protein sequence, read N- to C-terminus: Aspartate--tRNA(Asp/Asn) ligase (590 aa).

Residue glutamate 176 participates in L-aspartate binding. An aspartate region spans residues 200 to 203; the sequence is QLFK. L-aspartate contacts are provided by arginine 222 and histidine 451. Residue 222–224 participates in ATP binding; it reads RDE. Glutamate 485 contacts ATP. Arginine 492 provides a ligand contact to L-aspartate. ATP is bound at residue 537–540; sequence GIDR.

It belongs to the class-II aminoacyl-tRNA synthetase family. Type 1 subfamily. As to quaternary structure, homodimer.

It localises to the cytoplasm. The enzyme catalyses tRNA(Asx) + L-aspartate + ATP = L-aspartyl-tRNA(Asx) + AMP + diphosphate. Aspartyl-tRNA synthetase with relaxed tRNA specificity since it is able to aspartylate not only its cognate tRNA(Asp) but also tRNA(Asn). Reaction proceeds in two steps: L-aspartate is first activated by ATP to form Asp-AMP and then transferred to the acceptor end of tRNA(Asp/Asn). This Ehrlichia chaffeensis (strain ATCC CRL-10679 / Arkansas) protein is Aspartate--tRNA(Asp/Asn) ligase.